Consider the following 145-residue polypeptide: Ribosomal RNA large subunit methyltransferase H (145 aa).

S-adenosyl-L-methionine contacts are provided by residues Leu68, Gly95, and Phe113–Phe118.

The protein belongs to the RNA methyltransferase RlmH family. Homodimer.

It is found in the cytoplasm. It carries out the reaction pseudouridine(1915) in 23S rRNA + S-adenosyl-L-methionine = N(3)-methylpseudouridine(1915) in 23S rRNA + S-adenosyl-L-homocysteine + H(+). Functionally, specifically methylates the pseudouridine at position 1915 (m3Psi1915) in 23S rRNA. This chain is Ribosomal RNA large subunit methyltransferase H, found in Mycoplasmopsis pulmonis (strain UAB CTIP) (Mycoplasma pulmonis).